A 125-amino-acid polypeptide reads, in one-letter code: Histone H2A (125 aa).

A compositionally biased stretch (basic residues) spans 1-18 (MSGRGKGGKAKAKAKSRS). The segment at 1 to 21 (MSGRGKGGKAKAKAKSRSSRA) is disordered. N-acetylserine is present on S2. At Q104 the chain carries N5-methylglutamine.

It belongs to the histone H2A family. The nucleosome is a histone octamer containing two molecules each of H2A, H2B, H3 and H4 assembled in one H3-H4 heterotetramer and two H2A-H2B heterodimers. The octamer wraps approximately 147 bp of DNA.

Its subcellular location is the nucleus. The protein localises to the chromosome. Functionally, core component of nucleosome. Nucleosomes wrap and compact DNA into chromatin, limiting DNA accessibility to the cellular machineries which require DNA as a template. Histones thereby play a central role in transcription regulation, DNA repair, DNA replication and chromosomal stability. DNA accessibility is regulated via a complex set of post-translational modifications of histones, also called histone code, and nucleosome remodeling. This chain is Histone H2A, found in Mytilus trossulus (Blue mussel).